We begin with the raw amino-acid sequence, 245 residues long: Uridylate kinase (245 aa).

Residue 15–18 participates in ATP binding; sequence KLSG. Positions 23–28 are involved in allosteric activation by GTP; sequence GDEGFG. Residue glycine 57 participates in UMP binding. Positions 58 and 62 each coordinate ATP. Residues aspartate 77 and 138 to 145 contribute to the UMP site; that span reads TGNPFCTT. ATP contacts are provided by threonine 165, tyrosine 171, and aspartate 174.

Belongs to the UMP kinase family. Homohexamer.

The protein localises to the cytoplasm. It catalyses the reaction UMP + ATP = UDP + ADP. It functions in the pathway pyrimidine metabolism; CTP biosynthesis via de novo pathway; UDP from UMP (UMPK route): step 1/1. With respect to regulation, allosterically activated by GTP. Inhibited by UTP. Functionally, catalyzes the reversible phosphorylation of UMP to UDP. In Shewanella sp. (strain W3-18-1), this protein is Uridylate kinase.